Consider the following 20-residue polypeptide: Styelin-A (20 aa).

As to expression, hemocytes and pharyngeal tissues.

The protein resides in the secreted. Its function is as follows. Bactericidal against several Gram-positive and Gram-negative bacteria. In Styela clava (Sea squirt), this protein is Styelin-A.